We begin with the raw amino-acid sequence, 204 residues long: Somatotropin (204 aa).

Positions 1 to 17 are cleaved as a signal peptide; the sequence is MDRVLLLLSVLSLGVSS. Gln-18 bears the Pyrrolidone carboxylic acid mark. A Zn(2+)-binding site is contributed by His-36. A disulfide bond links Cys-69 and Cys-177. Glu-186 is a binding site for Zn(2+). Cys-194 and Cys-202 are oxidised to a cystine.

It belongs to the somatotropin/prolactin family.

Its subcellular location is the secreted. Growth hormone plays an important role in growth control and is involved in the regulation of several anabolic processes. Implicated as an osmoregulatory substance important for seawater adaptation. This Sciaenops ocellatus (Red drum) protein is Somatotropin (gh).